Reading from the N-terminus, the 102-residue chain is Small ribosomal subunit protein uS10 (102 aa).

The segment at Thr-30–Thr-58 is disordered.

Belongs to the universal ribosomal protein uS10 family. As to quaternary structure, part of the 30S ribosomal subunit.

Involved in the binding of tRNA to the ribosomes. This chain is Small ribosomal subunit protein uS10, found in Haloquadratum walsbyi (strain DSM 16790 / HBSQ001).